Consider the following 426-residue polypeptide: Phosphomethylpyrimidine synthase (426 aa).

Substrate is bound by residues asparagine 65, methionine 94, tyrosine 123, histidine 162, 184 to 186 (SRG), 225 to 228 (DGMR), and glutamate 264. Histidine 268 contributes to the Zn(2+) binding site. Tyrosine 291 is a substrate binding site. Zn(2+) is bound at residue histidine 332. Cysteine 408, cysteine 411, and cysteine 415 together coordinate [4Fe-4S] cluster.

The protein belongs to the ThiC family. Requires [4Fe-4S] cluster as cofactor.

The enzyme catalyses 5-amino-1-(5-phospho-beta-D-ribosyl)imidazole + S-adenosyl-L-methionine = 4-amino-2-methyl-5-(phosphooxymethyl)pyrimidine + CO + 5'-deoxyadenosine + formate + L-methionine + 3 H(+). Its pathway is cofactor biosynthesis; thiamine diphosphate biosynthesis. In terms of biological role, catalyzes the synthesis of the hydroxymethylpyrimidine phosphate (HMP-P) moiety of thiamine from aminoimidazole ribotide (AIR) in a radical S-adenosyl-L-methionine (SAM)-dependent reaction. The chain is Phosphomethylpyrimidine synthase from Methanocaldococcus jannaschii (strain ATCC 43067 / DSM 2661 / JAL-1 / JCM 10045 / NBRC 100440) (Methanococcus jannaschii).